The following is a 311-amino-acid chain: Cell division control protein 2 homolog 3 (311 aa).

In terms of domain architecture, Protein kinase spans 23–306; it reads YNRMDILGEG…AKAALQHPWF (284 aa). Residues 29 to 37 and Lys52 each bind ATP; that span reads LGEGTYGVV. Thr33 is modified (phosphothreonine). Position 34 is a phosphotyrosine (Tyr34). Asp145 (proton acceptor) is an active-site residue.

This sequence belongs to the protein kinase superfamily. CMGC Ser/Thr protein kinase family. CDC2/CDKX subfamily. Forms a stable but non-covalent complex with a regulatory subunit and with a cyclin.

It carries out the reaction L-seryl-[protein] + ATP = O-phospho-L-seryl-[protein] + ADP + H(+). The enzyme catalyses L-threonyl-[protein] + ATP = O-phospho-L-threonyl-[protein] + ADP + H(+). Phosphorylation at Thr-33 or Tyr-34 inactivates the enzyme. Its function is as follows. Probably involved in the control of the cell cycle. This Trypanosoma brucei brucei protein is Cell division control protein 2 homolog 3 (CRK3).